The chain runs to 264 residues: Thymidylate synthase (264 aa).

Arginine 21 is a binding site for dUMP. A (6R)-5,10-methylene-5,6,7,8-tetrahydrofolate-binding site is contributed by histidine 51. 126-127 (RR) is a dUMP binding site. Residue cysteine 146 is the Nucleophile of the active site. Residues 166–169 (RSVD), asparagine 177, and 207–209 (HLY) contribute to the dUMP site. A (6R)-5,10-methylene-5,6,7,8-tetrahydrofolate-binding site is contributed by aspartate 169. Residue serine 263 coordinates (6R)-5,10-methylene-5,6,7,8-tetrahydrofolate.

Belongs to the thymidylate synthase family. Bacterial-type ThyA subfamily. In terms of assembly, homodimer.

The protein resides in the cytoplasm. It catalyses the reaction dUMP + (6R)-5,10-methylene-5,6,7,8-tetrahydrofolate = 7,8-dihydrofolate + dTMP. Its pathway is pyrimidine metabolism; dTTP biosynthesis. In terms of biological role, catalyzes the reductive methylation of 2'-deoxyuridine-5'-monophosphate (dUMP) to 2'-deoxythymidine-5'-monophosphate (dTMP) while utilizing 5,10-methylenetetrahydrofolate (mTHF) as the methyl donor and reductant in the reaction, yielding dihydrofolate (DHF) as a by-product. This enzymatic reaction provides an intracellular de novo source of dTMP, an essential precursor for DNA biosynthesis. This chain is Thymidylate synthase, found in Anoxybacillus flavithermus (strain DSM 21510 / WK1).